The sequence spans 210 residues: 2,3-bisphosphoglycerate-dependent phosphoglycerate mutase (210 aa).

Substrate-binding positions include 9-16 (RHGQSEWN), 22-23 (TG), Arg61, 88-91 (ERDY), Lys99, 115-116 (RR), and 159-160 (GN). His10 functions as the Tele-phosphohistidine intermediate in the catalytic mechanism. The active-site Proton donor/acceptor is Glu88.

It belongs to the phosphoglycerate mutase family. BPG-dependent PGAM subfamily. As to quaternary structure, homodimer.

It carries out the reaction (2R)-2-phosphoglycerate = (2R)-3-phosphoglycerate. It functions in the pathway carbohydrate degradation; glycolysis; pyruvate from D-glyceraldehyde 3-phosphate: step 3/5. Functionally, catalyzes the interconversion of 2-phosphoglycerate and 3-phosphoglycerate. The sequence is that of 2,3-bisphosphoglycerate-dependent phosphoglycerate mutase from Parvibaculum lavamentivorans (strain DS-1 / DSM 13023 / NCIMB 13966).